Consider the following 1477-residue polypeptide: MRARRQENSISTPSAPSTSTSPRKKASIGNSRSKNHGSKMEMYDQFYKKFVRPPMAPIYYPTEEEFSDPIEYVAKIRHEAEKFGVVKIVPPANFKPPFAIDKEAFTFRPRTQKLNEVEAIVKEKHTFIDRLINFNRYSGLTFEFPVDRDGNIVDLYRLHRIVQNFGGCEEVNEDEKWRDVAREYLPKEQMARGVPSAFINLIRSHYNLHIEPFNRNLKEKAMKNDDESDDEMEELKHKYQHHHGTMRTEIEVPNDKTTEGGEDECPVSMQSGRRRSKNKKASSSRKTLGTSSKKNSTRGRKNKKKAEGDDDDDEDPMDQVFCVACNEGKDEDLLLLCDIDGCNNGRHTYCCDPVLDEVPEGEWRCPKCIESEDAKIGLDWGFYDADTEYNLNSFTEFANKWKCDYFGVKDVSQVSCDAVERSFWKNVISHENPVSVKYGADLITSRVGSGFPRKEDKHTGPDLKLKQQYASHAWNLNNMPVLRESVLSHFNTGISGMMVPWVYVGMCFSTFCWHTEDHWTYSVNYNHFGERKIWYGVGGEDAEKFEDALKKIAPGLTGRQRDLFHHMTTAANPHLLRSLGVPIHSVHQNAGEFVITFPRAYHAGFNEGLNFAEAVNFAPIDWLSKGRECVESYSNVRRYLVFSHDELLFKMVEAMDKLGISMSLATHEELIRIYEKQKMLRELLARLGVSNRQMQQVMFEKIPDEQRSCRFCKTTLFMCALVCNKHKKMTCVEHHDHLCNSCTTKDYRYQYRFELDQLNNMCDELGKRTVNYNGWKEESDEMLEEEGKPKLERIEEFIDSAKQNKYPQTDQVHKLITIRHTAKSAIEKANQLLFKKVRTRTKTRCQRADTRTDTEGVRSLIEQMQAMDCNLTVIIDKLEKWMEQVEMWRNRAKDAIYREQEYSKEEIEKIIEEGDEYDIKLEEIDELRKVIQMKDWSDRARKVTTWKATPDMEKDIDFEYKLRYASSDILSLIRDSPRNPTDGTSKLVFELQQMLRDANTLEVIANNFCENPALDQLQSIWQSLRETDWFYEKYINMVRYEIIHVAKIKSMIDAAIPVLSEFDLKTQLQKIVNVEITLSKAAEISKAFETSKCLNGSEEHLGILDMISTMNAFTQRIAILFKPNNAYHNLFEILSERDDLTPLAEGQTIPLYFQGGAVHPSDEWHQMKEFESLDQIVHHQSSLREMQMRIFEKVKQANSARGLEACSCLGFNKSDDSESTLTCIMCDSEFHVRCCEWSPFLEKLPEGCFLCVRCLRGQRPVIDDVTTALNGTPSGCLETHLVRNLIQKTRGITQNLMEAANKRKSGESSDDICKIALFDWLSCEILNPNGLPKARELISEFYMEYLQKQSSAALELKNRPVRSKPSVSLFDPKITAKRKRPSVSHKETSKKSRKRQSQASPSEYYEDESEFKSCQARACLKPYGDSVNWVMCEAGCKNWFHVICLGFTLREINDMHEYRCSSCLDHADSPTSSVSTD.

The disordered stretch occupies residues 1–37; the sequence is MRARRQENSISTPSAPSTSTSPRKKASIGNSRSKNHG. A compositionally biased stretch (low complexity) spans 9–21; that stretch reads SISTPSAPSTSTS. Positions 56–97 constitute a JmjN domain; the sequence is APIYYPTEEEFSDPIEYVAKIRHEAEKFGVVKIVPPANFKPP. Residues 121–218 enclose the ARID domain; sequence VKEKHTFIDR…HIEPFNRNLK (98 aa). Residues 222–314 form a disordered region; the sequence is MKNDDESDDE…KAEGDDDDDE (93 aa). The segment covering 246–259 has biased composition (basic and acidic residues); that stretch reads MRTEIEVPNDKTTE. Composition is skewed to basic residues over residues 272 to 283 and 295 to 304; these read GRRRSKNKKASS and NSTRGRKNKK. Residues 319 to 371 form a PHD-type 1 zinc finger; sequence QVFCVACNEGKDEDLLLLCDIDGCNNGRHTYCCDPVLDEVPEGEWRCPKCIES. Residues 468-634 enclose the JmjC domain; that stretch reads QYASHAWNLN…KGRECVESYS (167 aa). Residues His514, Asp517, and His602 each coordinate Fe cation. The stretch at 874 to 926 forms a coiled coil; the sequence is IIDKLEKWMEQVEMWRNRAKDAIYREQEYSKEEIEKIIEEGDEYDIKLEEIDE. A PHD-type 2 zinc finger spans residues 1203–1257; sequence LEACSCLGFNKSDDSESTLTCIMCDSEFHVRCCEWSPFLEKLPEGCFLCVRCLRG. The tract at residues 1375 to 1404 is disordered; that stretch reads TAKRKRPSVSHKETSKKSRKRQSQASPSEY. A PHD-type 3 zinc finger spans residues 1411–1466; the sequence is FKSCQARACLKPYGDSVNWVMCEAGCKNWFHVICLGFTLREINDMHEYRCSSCLDH.

It belongs to the JARID1 histone demethylase family. It depends on Fe(2+) as a cofactor.

Its subcellular location is the nucleus. It catalyses the reaction N(6),N(6),N(6)-trimethyl-L-lysyl(4)-[histone H3] + 3 2-oxoglutarate + 3 O2 = L-lysyl(4)-[histone H3] + 3 formaldehyde + 3 succinate + 3 CO2. Functionally, histone demethylase that specifically demethylates 'Lys-4' of histone H3, thereby playing a central role in histone code. Does not demethylate histone H3 'Lys-9', H3 'Lys-27', H3 'Lys-36', H3 'Lys-79' or H4 'Lys-20'. Demethylates trimethylated and dimethylated but not monomethylated H3 'Lys-4'. Required for normal longevity of the soma in a germline-dependent manner. Implicated in the epigenetic inheritance of lifespan over several generations. Involved in larval development and vulva formation. The chain is Lysine-specific demethylase rbr-2 (rbr-2) from Caenorhabditis elegans.